The following is a 237-amino-acid chain: Ribonuclease PH (237 aa).

Phosphate contacts are provided by residues Arg86 and 124-126 (GTR).

It belongs to the RNase PH family. As to quaternary structure, homohexameric ring arranged as a trimer of dimers.

The enzyme catalyses tRNA(n+1) + phosphate = tRNA(n) + a ribonucleoside 5'-diphosphate. Its function is as follows. Phosphorolytic 3'-5' exoribonuclease that plays an important role in tRNA 3'-end maturation. Removes nucleotide residues following the 3'-CCA terminus of tRNAs; can also add nucleotides to the ends of RNA molecules by using nucleoside diphosphates as substrates, but this may not be physiologically important. Probably plays a role in initiation of 16S rRNA degradation (leading to ribosome degradation) during starvation. The sequence is that of Ribonuclease PH from Shewanella sp. (strain ANA-3).